Reading from the N-terminus, the 287-residue chain is Viomycin phosphotransferase (287 aa).

Asp-190 serves as the catalytic Proton acceptor.

Belongs to the aminoglycoside phosphotransferase family.

It carries out the reaction viomycin + ATP = O-phosphoviomycin + ADP + H(+). Functionally, the aminoglycoside phosphotransferases achieve inactivation of their antibiotic substrates by phosphorylation. This chain is Viomycin phosphotransferase (vph), found in Streptomyces vinaceus.